Consider the following 381-residue polypeptide: Chymosin (381 aa).

The signal sequence occupies residues 1-16 (MRCLVVLLAVFALSQG). Positions 17-58 (AEITRIPLYKGKSLRKALKEHGLLEDFLQKQQYGISSKYSGF) are cleaved as a propeptide — activation peptide. Residues 74–378 (YFGKIYLGTP…DRANNLVGLA (305 aa)) enclose the Peptidase A1 domain. Aspartate 92 is a catalytic residue. 2 disulfides stabilise this stretch: cysteine 105/cysteine 110 and cysteine 265/cysteine 269. Residue aspartate 274 is part of the active site. Residues cysteine 308 and cysteine 341 are joined by a disulfide bond.

The protein belongs to the peptidase A1 family. Monomer.

The catalysed reaction is Broad specificity similar to that of pepsin A. Clots milk by cleavage of a single 104-Ser-Phe-|-Met-Ala-107 bond in kappa-chain of casein.. In terms of biological role, chymosin is synthesized in the mucosa of the abomasum (fourth stomach) of young (unweaned) ruminants. The enzyme hydrolyzes casein to paracasein. In Bos taurus (Bovine), this protein is Chymosin (CYM).